A 298-amino-acid polypeptide reads, in one-letter code: Tyrosine recombinase XerD (298 aa).

The region spanning 2 to 87 (KQDLARIEQF…AVRRLFQYLY (86 aa)) is the Core-binding (CB) domain. The 185-residue stretch at 108-292 (RLPKDLSEAQ…ATERLRQLHQ (185 aa)) folds into the Tyr recombinase domain. Catalysis depends on residues Arg-148, Lys-172, His-244, Arg-247, and His-270. Catalysis depends on Tyr-279, which acts as the O-(3'-phospho-DNA)-tyrosine intermediate.

This sequence belongs to the 'phage' integrase family. XerD subfamily. In terms of assembly, forms a cyclic heterotetrameric complex composed of two molecules of XerC and two molecules of XerD, in which XerC interacts with XerD via its C-terminal region, XerD interacts with XerC via its C-terminal region and so on.

It is found in the cytoplasm. FtsK may regulate the catalytic switch between XerC and XerD in the heterotetrameric complex during the two steps of the recombination process. Functionally, site-specific tyrosine recombinase, which acts by catalyzing the cutting and rejoining of the recombining DNA molecules. Binds cooperatively to specific DNA consensus sequences that are separated from XerC binding sites by a short central region, forming the heterotetrameric XerC-XerD complex that recombines DNA substrates. The complex is essential to convert dimers of the bacterial chromosome into monomers to permit their segregation at cell division. It also contributes to the segregational stability of plasmids. In the complex XerD specifically exchanges the bottom DNA strands. The protein is Tyrosine recombinase XerD of Escherichia coli O157:H7.